Reading from the N-terminus, the 342-residue chain is Transmembrane protein 59-like (342 aa).

Residues 1 to 24 (MAAVALMPPPLLLLLLLASPPAAS) form the signal peptide. Residue Asn97 is glycosylated (N-linked (GlcNAc...) asparagine). The chain crosses the membrane as a helical span at residues 268-290 (WILACCLFLSVLVMLWLSCSTLV). The short motif at 340–342 (TKL) is the Microbody targeting signal element.

Belongs to the TMEM59 family. In terms of tissue distribution, expressed preferentially at high level in the brain.

It localises to the golgi apparatus membrane. Its function is as follows. Modulates the O-glycosylation and complex N-glycosylation steps occurring during the Golgi maturation of APP. Inhibits APP transport to the cell surface and further shedding. The protein is Transmembrane protein 59-like (TMEM59L) of Homo sapiens (Human).